The primary structure comprises 217 residues: Cytochrome b5 domain-containing protein 1 (217 aa).

Residues 6 to 72 (PRFYTPREVS…NPKTGDVKTH (67 aa)) enclose the Cytochrome b5 heme-binding domain. Heme contacts are provided by His-41 and His-72.

The protein belongs to the cytochrome b5 family.

It is found in the cytoplasm. The protein resides in the cytoskeleton. It localises to the cilium axoneme. Its function is as follows. Radial spoke stalk protein that binds heme under oxidizing conditions. Required for the coordinated beating of multiple cilia maybe by functioning in a redox signaling pathway. The protein is Cytochrome b5 domain-containing protein 1 (cyb5d1) of Xenopus tropicalis (Western clawed frog).